Consider the following 288-residue polypeptide: Bifunctional protein FolD 2 (288 aa).

Residues 166–168 (GRS) and Ser-191 contribute to the NADP(+) site.

The protein belongs to the tetrahydrofolate dehydrogenase/cyclohydrolase family. As to quaternary structure, homodimer.

The catalysed reaction is (6R)-5,10-methylene-5,6,7,8-tetrahydrofolate + NADP(+) = (6R)-5,10-methenyltetrahydrofolate + NADPH. It catalyses the reaction (6R)-5,10-methenyltetrahydrofolate + H2O = (6R)-10-formyltetrahydrofolate + H(+). The protein operates within one-carbon metabolism; tetrahydrofolate interconversion. In terms of biological role, catalyzes the oxidation of 5,10-methylenetetrahydrofolate to 5,10-methenyltetrahydrofolate and then the hydrolysis of 5,10-methenyltetrahydrofolate to 10-formyltetrahydrofolate. This is Bifunctional protein FolD 2 from Frankia casuarinae (strain DSM 45818 / CECT 9043 / HFP020203 / CcI3).